A 387-amino-acid chain; its full sequence is Phosphoglycerate kinase (387 aa).

Substrate contacts are provided by residues 21-23 (DLN), Arg-36, 59-62 (HLGR), Arg-113, and Arg-146. ATP contacts are provided by residues Lys-197, Glu-314, and 340-343 (GGDT).

This sequence belongs to the phosphoglycerate kinase family. Monomer.

It localises to the cytoplasm. The catalysed reaction is (2R)-3-phosphoglycerate + ATP = (2R)-3-phospho-glyceroyl phosphate + ADP. It functions in the pathway carbohydrate degradation; glycolysis; pyruvate from D-glyceraldehyde 3-phosphate: step 2/5. The protein is Phosphoglycerate kinase of Photorhabdus luminescens (Xenorhabdus luminescens).